The chain runs to 156 residues: UPF0523 protein C (156 aa).

Belongs to the UPF0523 family.

In Dictyostelium discoideum (Social amoeba), this protein is UPF0523 protein C.